A 103-amino-acid chain; its full sequence is Large ribosomal subunit protein uL24 (103 aa).

It belongs to the universal ribosomal protein uL24 family. As to quaternary structure, part of the 50S ribosomal subunit.

In terms of biological role, one of two assembly initiator proteins, it binds directly to the 5'-end of the 23S rRNA, where it nucleates assembly of the 50S subunit. Its function is as follows. One of the proteins that surrounds the polypeptide exit tunnel on the outside of the subunit. This is Large ribosomal subunit protein uL24 from Brucella abortus (strain S19).